A 197-amino-acid chain; its full sequence is Imidazoleglycerol-phosphate dehydratase (197 aa).

Belongs to the imidazoleglycerol-phosphate dehydratase family.

It is found in the cytoplasm. The enzyme catalyses D-erythro-1-(imidazol-4-yl)glycerol 3-phosphate = 3-(imidazol-4-yl)-2-oxopropyl phosphate + H2O. Its pathway is amino-acid biosynthesis; L-histidine biosynthesis; L-histidine from 5-phospho-alpha-D-ribose 1-diphosphate: step 6/9. This Rhodopseudomonas palustris (strain BisB5) protein is Imidazoleglycerol-phosphate dehydratase.